We begin with the raw amino-acid sequence, 309 residues long: Putative S-adenosyl-L-methionine-dependent methyltransferase Mvan_0104 (309 aa).

S-adenosyl-L-methionine contacts are provided by residues Asp-134 and 163–164 (DL).

It belongs to the UPF0677 family.

Its function is as follows. Exhibits S-adenosyl-L-methionine-dependent methyltransferase activity. This is Putative S-adenosyl-L-methionine-dependent methyltransferase Mvan_0104 from Mycolicibacterium vanbaalenii (strain DSM 7251 / JCM 13017 / BCRC 16820 / KCTC 9966 / NRRL B-24157 / PYR-1) (Mycobacterium vanbaalenii).